Here is a 163-residue protein sequence, read N- to C-terminus: Cyanate hydratase (163 aa).

Active-site residues include Arg103, Glu106, and Ser129.

This sequence belongs to the cyanase family.

It catalyses the reaction cyanate + hydrogencarbonate + 3 H(+) = NH4(+) + 2 CO2. In terms of biological role, catalyzes the reaction of cyanate with bicarbonate to produce ammonia and carbon dioxide. The protein is Cyanate hydratase of Ajellomyces capsulatus (strain H143) (Darling's disease fungus).